The following is a 629-amino-acid chain: ATP-dependent RNA helicase DeaD (629 aa).

A Q motif motif is present at residues 6-34; that stretch reads TTFADLGLKAPILEALNDLGYEKPSPIQA. The Helicase ATP-binding domain occupies 37–208; sequence IPHLLNGRDV…RRFMKEPQEV (172 aa). Position 50–57 (50–57) interacts with ATP; sequence AQTGSGKT. The short motif at 156–159 is the DEAD box element; the sequence is DEAD. The region spanning 232-379 is the Helicase C-terminal domain; it reads KNEALVRFLE…EVELPNAELL (148 aa). Disordered regions lie at residues 438-481 and 560-629; these read LIVP…RERR and LGDA…GGDA. Basic and acidic residues-rich tracts occupy residues 446–481 and 568–629; these read MRPK…RERR and GGER…GGDA.

This sequence belongs to the DEAD box helicase family. DeaD/CsdA subfamily. As to quaternary structure, interacts with the 50S ribosomal subunit upon shifting to 15 degrees Celsius. Also found associated with the RNA degradosome at 15 degrees Celsius; binds RNase E (rne).

The protein resides in the cytoplasm. It carries out the reaction ATP + H2O = ADP + phosphate + H(+). DEAD-box RNA helicase involved in various cellular processes at low temperature, including ribosome biogenesis, mRNA degradation and translation initiation. Exhibits RNA-stimulated ATP hydrolysis and RNA unwinding activity at low temperature. Involved in 50S ribosomal subunit assembly, acting after SrmB, and could also play a role in the biogenesis of the 30S ribosomal subunit. In addition, is involved in mRNA decay, via formation of a cold-shock degradosome with RNase E. Also stimulates translation of some mRNAs, probably at the level of initiation. The polypeptide is ATP-dependent RNA helicase DeaD (Escherichia coli (strain K12)).